The chain runs to 629 residues: MASEKILGVDLGTTNSAFAVMEGSDPEIITNEEGDRTTPSIVAHDDGELLVGKPAKNQAVQNPDQTIASIKRHMGEEDYTVALGDDEYTPEEISARILQKIKRDAEEYLGQDVEKAVITVPAYFNDRQRQATKDAGEIAGFDVERIVNEPTAASMAYGLDEDRDQTVLVYDLGGGTFDVSILDLGGGVYEVAATNGDNDLGGDDWDHAIIDHLADNFENEHGIDLREDRQALQRLTEAAEEAKIELSSRKETTVNLPFVTATDSGPVHLEQDITRATFESITEDLIERTVGPTEQALEDAGLSKSDIDDVILVGGSTRMPQVQAQVEDLVGQEPKKNVNPDEAVALGAAVQGGVLSGEVDDIVLVDVTPLSLGIEVKGGLFERLIEKNTAIPTTASKVFTTAADNQTSVQIRVFQGEREIASENELLGDFHLTGIPPAPAGTPQIEVTFEIDADGIVNVEAEDQGSGNAESITIEGGAGLSDEQIDEMQEDAEAHAEEDEQRRRRIEARNEAETAIQRAESLLEENEELVDEDLEADVNDAIDDVQAVLDEDEPEIDALETATEELSDTLQEIGKQAYQQQQDAQAGAAGGAGGMGGMGGMADGPGGAADADGDDEEYVDADFEDVDEE.

The span at 576-587 (QAYQQQQDAQAG) shows a compositional bias: low complexity. The tract at residues 576–629 (QAYQQQQDAQAGAAGGAGGMGGMGGMADGPGGAADADGDDEEYVDADFEDVDEE) is disordered. Over residues 588–607 (AAGGAGGMGGMGGMADGPGG) the composition is skewed to gly residues. Over residues 611 to 629 (ADGDDEEYVDADFEDVDEE) the composition is skewed to acidic residues.

This sequence belongs to the heat shock protein 70 family.

Its function is as follows. Acts as a chaperone. This chain is Chaperone protein DnaK, found in Halobacterium salinarum (strain ATCC 29341 / DSM 671 / R1).